The chain runs to 227 residues: PKHD-type hydroxylase Bphyt_7102 (227 aa).

Positions 80 to 179 constitute a Fe2OG dioxygenase domain; that stretch reads QVYPPLFNRY…RIASFFWVQS (100 aa). Positions 98, 100, and 160 each coordinate Fe cation. Residue R170 coordinates 2-oxoglutarate.

Fe(2+) is required as a cofactor. It depends on L-ascorbate as a cofactor.

The chain is PKHD-type hydroxylase Bphyt_7102 from Paraburkholderia phytofirmans (strain DSM 17436 / LMG 22146 / PsJN) (Burkholderia phytofirmans).